Here is a 165-residue protein sequence, read N- to C-terminus: Thiol peroxidase (165 aa).

Residues 18–164 form the Thioredoxin domain; the sequence is RKVGDKAPNF…YEAAIEAAKK (147 aa). Cysteine 60 acts as the Cysteine sulfenic acid (-SOH) intermediate in catalysis. An intrachain disulfide couples cysteine 60 to cysteine 94.

The protein belongs to the peroxiredoxin family. Tpx subfamily. Homodimer.

The enzyme catalyses a hydroperoxide + [thioredoxin]-dithiol = an alcohol + [thioredoxin]-disulfide + H2O. In terms of biological role, thiol-specific peroxidase that catalyzes the reduction of hydrogen peroxide and organic hydroperoxides to water and alcohols, respectively. Plays a role in cell protection against oxidative stress by detoxifying peroxides. In Listeria innocua serovar 6a (strain ATCC BAA-680 / CLIP 11262), this protein is Thiol peroxidase.